A 707-amino-acid polypeptide reads, in one-letter code: Complement C1r-A subcomponent (707 aa).

The signal sequence occupies residues 1–16 (MWLFALLVTLFYGVEG). Residues 17-140 (SIYLPQKLYG…KGFLAYYQAV (124 aa)) enclose the CUB 1 domain. The Ca(2+) site is built by Glu-65, Asp-73, and Asp-118. A disulfide bridge links Cys-70 with Cys-88. Residue Asn-124 is glycosylated (N-linked (GlcNAc...) asparagine). The Ca(2+) site is built by Asp-141, Leu-142, and Glu-144. Residues 141 to 189 (DLDECASQPNSVEEGLQPRCQHLCHNYVGGYFCSCHPGYELQKDGQSCQ) form the EGF-like; calcium-binding domain. 4 cysteine pairs are disulfide-bonded: Cys-145/Cys-164, Cys-160/Cys-173, Cys-175/Cys-188, and Cys-192/Cys-219. Ca(2+) contacts are provided by Asn-166, Tyr-167, and Gly-170. Residue Asn-166 is modified to (3R)-3-hydroxyasparagine. One can recognise a CUB 2 domain in the interval 192-304 (CSSELYTEPS…RGWKLHYTTE (113 aa)). Ser-205 is modified (phosphoserine; by CK2). N-linked (GlcNAc...) asparagine glycosylation occurs at Asn-220. Residues Asp-242, Asp-252, Asp-289, and Asp-293 each coordinate Ca(2+). Cysteines 249 and 267 form a disulfide. 2 Sushi domains span residues 306–372 (IKCP…RCKI) and 373–448 (KNCG…RCLP). Intrachain disulfides connect Cys-308-Cys-357, Cys-337-Cys-370, Cys-375-Cys-428, Cys-405-Cys-446, and Cys-450-Cys-579. Residues 463 to 704 (IIRGQPARPG…YVDWIKKEMG (242 aa)) form the Peptidase S1 domain. Catalysis depends on charge relay system residues His-501 and Asp-559. Asn-583 carries an N-linked (GlcNAc...) asparagine glycan. Intrachain disulfides connect Cys-622–Cys-641 and Cys-652–Cys-682. Catalysis depends on Ser-656, which acts as the Charge relay system.

It belongs to the peptidase S1 family. As to quaternary structure, core component of the complement C1 complex, a calcium-dependent complex composed of 1 molecule of the C1Q subcomplex, 2 molecules of C1R and 2 molecules of C1S. The C1Q subcomplex is composed 18 subunits: 3 chains of C1QA, C1QB, and C1QC trimerize to form 6 collagen-like triple helices connected to six globular ligand-recognition modules. Within the C1 complex, C1R is a dimer of identical chains, each of which is activated by cleavage into two chains, heavy and light, connected by disulfide bonds. In terms of processing, cleaved and activated by autocatalytic processing to generate Complement C1r subcomponent heavy and light chains that are connected by disulfide bonds. Post-translationally, the iron and 2-oxoglutarate dependent 3-hydroxylation of aspartate and asparagine is (R) stereospecific within EGF domains.

It localises to the secreted. Its subcellular location is the cell surface. It carries out the reaction Selective cleavage of Lys(or Arg)-|-Ile bond in complement subcomponent C1s to form the active form of C1s (EC 3.4.21.42).. With respect to regulation, activated by the C1Q subcomplex of the C1 complex following C1Q binding to immunoglobulins (IgG or IgM) complexed with antigens to form antigen-antibody complexes on the surface of pathogens. Immunoglobulin-binding promotes autoactivation of C1R, which results in the cleavage of the Arg-Ile bond in the catalytic domain. Its function is as follows. Serine protease component of the complement C1 complex, a multiprotein complex that initiates the classical pathway of the complement system, a cascade of proteins that leads to phagocytosis and breakdown of pathogens and signaling that strengthens the adaptive immune system. C1R catalyzes the first enzymatic step in the classical complement pathway: it is activated by the C1Q subcomplex of the C1 complex, which associates with IgG or IgM immunoglobulins complexed with antigens to form antigen-antibody complexes on the surface of pathogens. Immunoglobulin-binding promotes the autocatalytic cleavage and activation of C1R. Activated C1R then cleaves and activates C1S, the second protease of the classical complement pathway. It is unclear if C1R activates C1S within single, strained C1 complexes or between neighboring C1 complexes on surfaces. The sequence is that of Complement C1r-A subcomponent (C1ra) from Mus musculus (Mouse).